The primary structure comprises 297 residues: Acetylglutamate kinase (297 aa).

Substrate is bound by residues 70–71 (GG), arginine 92, and asparagine 194.

This sequence belongs to the acetylglutamate kinase family. ArgB subfamily.

It is found in the cytoplasm. The enzyme catalyses N-acetyl-L-glutamate + ATP = N-acetyl-L-glutamyl 5-phosphate + ADP. It participates in amino-acid biosynthesis; L-arginine biosynthesis; N(2)-acetyl-L-ornithine from L-glutamate: step 2/4. Its function is as follows. Catalyzes the ATP-dependent phosphorylation of N-acetyl-L-glutamate. In Herminiimonas arsenicoxydans, this protein is Acetylglutamate kinase.